Reading from the N-terminus, the 245-residue chain is DNA repair protein RecO (245 aa).

It belongs to the RecO family.

In terms of biological role, involved in DNA repair and RecF pathway recombination. This chain is DNA repair protein RecO, found in Erwinia tasmaniensis (strain DSM 17950 / CFBP 7177 / CIP 109463 / NCPPB 4357 / Et1/99).